A 216-amino-acid polypeptide reads, in one-letter code: Pyrrolidone-carboxylate peptidase (216 aa).

Residues glutamate 80, cysteine 143, and histidine 167 contribute to the active site.

This sequence belongs to the peptidase C15 family. As to quaternary structure, homotetramer.

It localises to the cytoplasm. It catalyses the reaction Release of an N-terminal pyroglutamyl group from a polypeptide, the second amino acid generally not being Pro.. Functionally, removes 5-oxoproline from various penultimate amino acid residues except L-proline. This chain is Pyrrolidone-carboxylate peptidase (pcp), found in Streptomyces coelicolor (strain ATCC BAA-471 / A3(2) / M145).